Here is a 361-residue protein sequence, read N- to C-terminus: Chorismate synthase (361 aa).

Positions 48 and 54 each coordinate NADP(+). Residues 125–127, 238–239, glycine 278, 293–297, and arginine 319 each bind FMN; these read RSS, NA, and KPTSS.

Belongs to the chorismate synthase family. Homotetramer. FMNH2 is required as a cofactor.

It carries out the reaction 5-O-(1-carboxyvinyl)-3-phosphoshikimate = chorismate + phosphate. The protein operates within metabolic intermediate biosynthesis; chorismate biosynthesis; chorismate from D-erythrose 4-phosphate and phosphoenolpyruvate: step 7/7. Its function is as follows. Catalyzes the anti-1,4-elimination of the C-3 phosphate and the C-6 proR hydrogen from 5-enolpyruvylshikimate-3-phosphate (EPSP) to yield chorismate, which is the branch point compound that serves as the starting substrate for the three terminal pathways of aromatic amino acid biosynthesis. This reaction introduces a second double bond into the aromatic ring system. This Yersinia pseudotuberculosis serotype O:1b (strain IP 31758) protein is Chorismate synthase.